The primary structure comprises 138 residues: MAKPIPRIGSRRNGRIGSRKSARRIPKGVIHVQASFNNTIVTVTDVRGRVVSWSSAGTCGFRGTRRGTPFAAQTAAGNAIRTVVDQGMQRAEVMIKGPGLGRDAALRAIRRSGILLSFVRDVTPMPHNGCRPPKKRRV.

Residues 1 to 23 (MAKPIPRIGSRRNGRIGSRKSAR) form a disordered region. Positions 9-23 (GSRRNGRIGSRKSAR) are enriched in basic residues.

This sequence belongs to the universal ribosomal protein uS11 family. In terms of assembly, part of the 30S ribosomal subunit.

The protein resides in the plastid. It localises to the chloroplast. This Vitis vinifera (Grape) protein is Small ribosomal subunit protein uS11c.